Consider the following 170-residue polypeptide: 6,7-dimethyl-8-ribityllumazine synthase 2 (170 aa).

Residues Trp-25, 59–61, and 83–85 each bind 5-amino-6-(D-ribitylamino)uracil; these read AFE and LVV. The active-site Proton donor is Arg-91. Ser-116 is a binding site for 5-amino-6-(D-ribitylamino)uracil. His-130 lines the (2S)-2-hydroxy-3-oxobutyl phosphate pocket.

The protein belongs to the DMRL synthase family. Forms an icosahedral capsid composed of 60 subunits, arranged as a dodecamer of pentamers.

It catalyses the reaction (2S)-2-hydroxy-3-oxobutyl phosphate + 5-amino-6-(D-ribitylamino)uracil = 6,7-dimethyl-8-(1-D-ribityl)lumazine + phosphate + 2 H2O + H(+). Its pathway is cofactor biosynthesis; riboflavin biosynthesis; riboflavin from 2-hydroxy-3-oxobutyl phosphate and 5-amino-6-(D-ribitylamino)uracil: step 1/2. Catalyzes the formation of 6,7-dimethyl-8-ribityllumazine by condensation of 5-amino-6-(D-ribitylamino)uracil with 3,4-dihydroxy-2-butanone 4-phosphate. This is the penultimate step in the biosynthesis of riboflavin. In Pseudomonas syringae pv. tomato (strain ATCC BAA-871 / DC3000), this protein is 6,7-dimethyl-8-ribityllumazine synthase 2.